Reading from the N-terminus, the 115-residue chain is Putative TGFB1-induced anti-apoptotic factor 1 (115 aa).

Not detectable in normal kidney and liver. Up-regulated in chronic and acute allograft rejection: expressed in the inflammatory infiltrate and in tubular epithelial cells.

It is found in the nucleus. Its function is as follows. Inhibits the cytotoxic effects of TNF-alpha and overexpressed TNF receptor adapters TRADD, FADD, and RIPK1. Involved in TGF-beta1 inhibition of IkappaB-alpha expression and suppression of TNF-mediated IkappaB-alpha degradation. The chain is Putative TGFB1-induced anti-apoptotic factor 1 (MYO18A) from Homo sapiens (Human).